The primary structure comprises 144 residues: Putative pre-16S rRNA nuclease (144 aa).

The protein belongs to the YqgF nuclease family.

The protein localises to the cytoplasm. Functionally, could be a nuclease involved in processing of the 5'-end of pre-16S rRNA. The protein is Putative pre-16S rRNA nuclease of Chlorobium phaeobacteroides (strain BS1).